The primary structure comprises 198 residues: FMN-dependent NADH:quinone oxidoreductase (198 aa).

FMN is bound by residues Ser10, 16–18 (SQS), 94–97 (MYNF), and 138–141 (TRGG).

The protein belongs to the azoreductase type 1 family. As to quaternary structure, homodimer. It depends on FMN as a cofactor.

The enzyme catalyses 2 a quinone + NADH + H(+) = 2 a 1,4-benzosemiquinone + NAD(+). It catalyses the reaction N,N-dimethyl-1,4-phenylenediamine + anthranilate + 2 NAD(+) = 2-(4-dimethylaminophenyl)diazenylbenzoate + 2 NADH + 2 H(+). Quinone reductase that provides resistance to thiol-specific stress caused by electrophilic quinones. Its function is as follows. Also exhibits azoreductase activity. Catalyzes the reductive cleavage of the azo bond in aromatic azo compounds to the corresponding amines. The chain is FMN-dependent NADH:quinone oxidoreductase from Shewanella baltica (strain OS195).